Reading from the N-terminus, the 806-residue chain is Mitochondrial intermediate peptidase (806 aa).

The N-terminal 29 residues, 1–29, are a transit peptide targeting the mitochondrion; it reads MLSRHLTVLRSACRVSHDLRVPSTQAVRK. Residue His581 coordinates Zn(2+). Glu582 is an active-site residue. Positions 585 and 588 each coordinate Zn(2+).

It belongs to the peptidase M3 family. Zn(2+) serves as cofactor.

It localises to the mitochondrion matrix. The enzyme catalyses Release of an N-terminal octapeptide as second stage of processing of some proteins imported into the mitochondrion.. Functionally, cleaves proteins, imported into the mitochondrion, to their mature size. While most mitochondrial precursor proteins are processed to the mature form in one step by mitochondrial processing peptidase (MPP), the sequential cleavage by MIP of an octapeptide after initial processing by MPP is a required step for a subgroup of nuclear-encoded precursor proteins destined for the matrix or the inner membrane. The chain is Mitochondrial intermediate peptidase (OCT1) from Malassezia globosa (strain ATCC MYA-4612 / CBS 7966) (Dandruff-associated fungus).